Consider the following 346-residue polypeptide: Selenide, water dikinase (346 aa).

Cysteine 15 is a catalytic residue. ATP-binding positions include lysine 18 and 46–48 (SKD). Aspartate 49 is a Mg(2+) binding site. ATP contacts are provided by residues aspartate 66, aspartate 89, and 137 to 139 (GHS). Residue aspartate 89 coordinates Mg(2+). Residue aspartate 225 coordinates Mg(2+).

The protein belongs to the selenophosphate synthase 1 family. Class I subfamily. Homodimer. Mg(2+) is required as a cofactor.

The catalysed reaction is hydrogenselenide + ATP + H2O = selenophosphate + AMP + phosphate + 2 H(+). Synthesizes selenophosphate from selenide and ATP. This is Selenide, water dikinase from Photobacterium profundum (strain SS9).